A 160-amino-acid chain; its full sequence is Small ribosomal subunit protein uS17z (160 aa).

The protein belongs to the universal ribosomal protein uS17 family.

The protein resides in the cytoplasm. This Arabidopsis thaliana (Mouse-ear cress) protein is Small ribosomal subunit protein uS17z (RPS11A).